A 398-amino-acid polypeptide reads, in one-letter code: 1-deoxy-D-xylulose 5-phosphate reductoisomerase (398 aa).

Residues threonine 11, glycine 12, serine 13, isoleucine 14, and asparagine 125 each contribute to the NADPH site. Lysine 126 is a binding site for 1-deoxy-D-xylulose 5-phosphate. Glutamate 127 provides a ligand contact to NADPH. Position 151 (aspartate 151) interacts with Mn(2+). Residues serine 152, glutamate 153, serine 186, and histidine 209 each contribute to the 1-deoxy-D-xylulose 5-phosphate site. Glutamate 153 is a binding site for Mn(2+). Glycine 215 lines the NADPH pocket. The 1-deoxy-D-xylulose 5-phosphate site is built by serine 222, asparagine 227, lysine 228, and glutamate 231. Residue glutamate 231 participates in Mn(2+) binding.

This sequence belongs to the DXR family. It depends on Mg(2+) as a cofactor. The cofactor is Mn(2+).

The enzyme catalyses 2-C-methyl-D-erythritol 4-phosphate + NADP(+) = 1-deoxy-D-xylulose 5-phosphate + NADPH + H(+). Its pathway is isoprenoid biosynthesis; isopentenyl diphosphate biosynthesis via DXP pathway; isopentenyl diphosphate from 1-deoxy-D-xylulose 5-phosphate: step 1/6. Catalyzes the NADPH-dependent rearrangement and reduction of 1-deoxy-D-xylulose-5-phosphate (DXP) to 2-C-methyl-D-erythritol 4-phosphate (MEP). This Acinetobacter baumannii (strain ATCC 17978 / DSM 105126 / CIP 53.77 / LMG 1025 / NCDC KC755 / 5377) protein is 1-deoxy-D-xylulose 5-phosphate reductoisomerase.